Consider the following 143-residue polypeptide: Ribonuclease P protein component 2 (143 aa).

The protein belongs to the eukaryotic/archaeal RNase P protein component 2 family. Consists of a catalytic RNA component and at least 4-5 protein subunits.

The protein resides in the cytoplasm. It carries out the reaction Endonucleolytic cleavage of RNA, removing 5'-extranucleotides from tRNA precursor.. Functionally, part of ribonuclease P, a protein complex that generates mature tRNA molecules by cleaving their 5'-ends. The chain is Ribonuclease P protein component 2 from Saccharolobus islandicus (strain Y.N.15.51 / Yellowstone #2) (Sulfolobus islandicus).